The chain runs to 227 residues: MLIEIPEVLTKEQVAQCRQLMDAAEWVDGNVTSGSQSALAKNNMQLPEGSPVARQVGDLIQDALGMSPLFISAALPLKVFPPLFNRYEGGQAFGTHVDNAIRQLRGTNFRIRSDLSATLFFSEPEDYDGGVLTIEDTFGIQEVKLPAGHMVLYPSSSLHHVTPVTRGVRVSSFFWMQSMIRDDAQRTLLFQLDGSIQAIGAERGAGDPEVIRLTGVYHNLLRMWADS.

The Fe2OG dioxygenase domain occupies 78-178 (KVFPPLFNRY…RVSSFFWMQS (101 aa)). 3 residues coordinate Fe cation: histidine 96, aspartate 98, and histidine 159. Arginine 169 is a binding site for 2-oxoglutarate.

The cofactor is Fe(2+). It depends on L-ascorbate as a cofactor.

This is PKHD-type hydroxylase Mfla_2317 from Methylobacillus flagellatus (strain ATCC 51484 / DSM 6875 / VKM B-1610 / KT).